The chain runs to 443 residues: F-box/LRR-repeat protein At2g42720 (443 aa).

In terms of domain architecture, F-box spans 1 to 47 (MDRISSLPDEILEHILSFLSTKEAALTSSLSTRWKNVFVFVPSLHLD). LRR repeat units follow at residues 139-167 (KLRL…CLDT), 169-194 (DFDG…VLED), 201-236 (CGSV…ELSC), 271-296 (SSHL…HLTS), 323-348 (DKKQ…VFKG), and 363-389 (CSGI…SYQG).

In Arabidopsis thaliana (Mouse-ear cress), this protein is F-box/LRR-repeat protein At2g42720.